The following is a 440-amino-acid chain: MTTRQPLYKSLYVQVLVAITIGILLGHYYPETGVALKPLGDGFVKLIKMVIAPIIFCTVVSGIAGMQSMKSVGKTGGYALLYFEIVSTIALIIGLVVVNVVKPGAGMHIDVSTLNASSVAAYAAAGAQQTTVGFLLNVIPNTVVGAFANGDILQVLMFSVLFGFALHRLGSYGKPVLDMIDRFAHVMFNIINMIMKLAPIGAFGAMAFTIGQYGVGSLVQLGYLMACFYITCLLFVLVVLGGICRAHGFSVIKLIRYIREELLIVLGTSSSESALPRMLAKMERLGAKKSVVGLVIPTGYSFNLDGTSIYLTMAAVFIAQATDTTMDITHQITLLLVLLVASKGAAGVTGSGFIVLAATLSAVGHLPVAGLALILGIDRFMSEARALTNLVGNAVATVVVAKWVKEMDNDKLASELASGGAPLVDTRPTDDLGVAEGPAR.

Transmembrane regions (helical) follow at residues valine 15–alanine 35, leucine 46–methionine 66, tyrosine 78–valine 98, alanine 146–leucine 166, isoleucine 190–isoleucine 210, leucine 224–cysteine 244, valine 291–leucine 311, isoleucine 332–glycine 352, and isoleucine 354–isoleucine 374. Positions glycine 420–arginine 440 are disordered.

It belongs to the dicarboxylate/amino acid:cation symporter (DAACS) (TC 2.A.23) family.

It localises to the cell inner membrane. Responsible for the transport of dicarboxylates such as succinate, fumarate, and malate from the periplasm across the membrane. In Pseudomonas putida (strain ATCC 700007 / DSM 6899 / JCM 31910 / BCRC 17059 / LMG 24140 / F1), this protein is C4-dicarboxylate transport protein.